Consider the following 450-residue polypeptide: ATP-dependent protease ATPase subunit HslU (450 aa).

Residues V29, 71–76 (GVGKTE), D261, E328, and R400 each bind ATP.

Belongs to the ClpX chaperone family. HslU subfamily. As to quaternary structure, a double ring-shaped homohexamer of HslV is capped on each side by a ring-shaped HslU homohexamer. The assembly of the HslU/HslV complex is dependent on binding of ATP.

The protein localises to the cytoplasm. Functionally, ATPase subunit of a proteasome-like degradation complex; this subunit has chaperone activity. The binding of ATP and its subsequent hydrolysis by HslU are essential for unfolding of protein substrates subsequently hydrolyzed by HslV. HslU recognizes the N-terminal part of its protein substrates and unfolds these before they are guided to HslV for hydrolysis. The polypeptide is ATP-dependent protease ATPase subunit HslU (Rickettsia conorii (strain ATCC VR-613 / Malish 7)).